A 411-amino-acid polypeptide reads, in one-letter code: CinA-like protein (411 aa).

Belongs to the CinA family.

This chain is CinA-like protein, found in Dictyoglomus thermophilum (strain ATCC 35947 / DSM 3960 / H-6-12).